Here is a 232-residue protein sequence, read N- to C-terminus: Lipopolysaccharide core heptose(II) kinase WaaY (232 aa).

This sequence belongs to the protein kinase superfamily. RfaY/WaaY family.

It catalyses the reaction alpha-D-Glc-(1-&gt;3)-[L-alpha-D-Hep-(1-&gt;7)]-L-alpha-D-Hep-(1-&gt;3)-4-O-PO3(2-)-L-alpha-D-Hep-(1-&gt;5)-[alpha-Kdo-(2-&gt;4)]-alpha-Kdo-(2-&gt;6)-lipid A + ATP = alpha-D-Glc-(1-&gt;3)-[L-alpha-D-Hep-(1-&gt;7)]-4-O-PO3(2-)-L-alpha-D-Hep-(1-&gt;3)-4-O-PO3(2-)-L-alpha-D-Hep-(1-&gt;5)-[alpha-Kdo-(2-&gt;4)]-alpha-Kdo-(2-&gt;6)-lipid A + ADP + H(+). Its pathway is bacterial outer membrane biogenesis; LPS core biosynthesis. Functionally, kinase involved in the biosynthesis of the core oligosaccharide region of lipopolysaccharide (LPS). Catalyzes the phosphorylation of the second heptose unit (HepII) of the inner core. The sequence is that of Lipopolysaccharide core heptose(II) kinase WaaY from Salmonella typhimurium (strain LT2 / SGSC1412 / ATCC 700720).